The sequence spans 578 residues: 2-succinyl-5-enolpyruvyl-6-hydroxy-3-cyclohexene-1-carboxylate synthase (578 aa).

Positions 186 to 208 are disordered; it reads LPAAGGEHHPAEPRSTPWDGPVP.

This sequence belongs to the TPP enzyme family. MenD subfamily. Homodimer. Mg(2+) serves as cofactor. Requires Mn(2+) as cofactor. The cofactor is thiamine diphosphate.

It catalyses the reaction isochorismate + 2-oxoglutarate + H(+) = 5-enolpyruvoyl-6-hydroxy-2-succinyl-cyclohex-3-ene-1-carboxylate + CO2. The protein operates within quinol/quinone metabolism; 1,4-dihydroxy-2-naphthoate biosynthesis; 1,4-dihydroxy-2-naphthoate from chorismate: step 2/7. Its pathway is cofactor biosynthesis; phylloquinone biosynthesis. In terms of biological role, catalyzes the thiamine diphosphate-dependent decarboxylation of 2-oxoglutarate and the subsequent addition of the resulting succinic semialdehyde-thiamine pyrophosphate anion to isochorismate to yield 2-succinyl-5-enolpyruvyl-6-hydroxy-3-cyclohexene-1-carboxylate (SEPHCHC). The chain is 2-succinyl-5-enolpyruvyl-6-hydroxy-3-cyclohexene-1-carboxylate synthase from Synechococcus sp. (strain WH7803).